We begin with the raw amino-acid sequence, 179 residues long: Interleukin-22 (179 aa).

Residues 1-33 form the signal peptide; it reads MAALQKSVSSFLMGTLATSCLLLLALLVQGGAA. 2 disulfides stabilise this stretch: Cys40/Cys132 and Cys89/Cys178. N-linked (GlcNAc...) asparagine glycans are attached at residues Asn54, Asn68, and Asn97.

This sequence belongs to the IL-10 family.

The protein resides in the secreted. In terms of biological role, cytokine that plays a critical role in modulating tissue responses during inflammation. Plays an essential role in the regeneration of epithelial cells to maintain barrier function after injury and for the prevention of further tissue damage. Unlike most of the cytokines, has no effect on immune cells. Signals through a heterodimeric receptor composed of two subunits, the specific receptor IL22RA1 which is present on non-immune cells in many organs and the shared subunit IL10RB. Ligation of IL22RA1 with IL22 induces activation of the tyrosine kinases JAK1 and TYK2, which in turn activates STAT3. In turn, promotes cell survival and proliferation through STAT3, ERK1/2 and PI3K/AKT pathways. Promotes phosphorylation of GSK3B at 'Ser-9' and CTTN. Promotes epithelial cell spreading. This Homo sapiens (Human) protein is Interleukin-22 (IL22).